A 3336-amino-acid chain; its full sequence is Pericentrin (3336 aa).

2 disordered regions span residues 1 to 71 and 81 to 100; these read MEVE…DICK and GAGGAFAAQPEDCDGEKRED. Residues 27-37 are compositionally biased toward basic and acidic residues; the sequence is TKGDSSHSEKK. Ser-44 carries the phosphoserine modification. Ser-188 is subject to Phosphoserine. At Thr-191 the chain carries Phosphothreonine. Residues 258–553 adopt a coiled-coil conformation; that stretch reads HTAQLELTQA…RLQGAREDAL (296 aa). A disordered region spans residues 569 to 589; sequence KPEKGRKDHVDELEPERHKES. A phosphoserine mark is found at Ser-610 and Ser-682. Coiled coils occupy residues 675–835 and 1010–1146; these read TEHK…DALH and TILT…MLKA. A Phosphoserine modification is found at Ser-1245. Residues 1299–1949 adopt a coiled-coil conformation; sequence NEETAQVVRK…FLRCQVELDR (651 aa). A disordered region spans residues 1619–1638; it reads TLDAGRCPEPPSGSPPEGPE. Pro residues predominate over residues 1626–1636; the sequence is PEPPSGSPPEG. A phosphoserine mark is found at Ser-1653 and Ser-1712. Residues 1954-1974 are disordered; that stretch reads RATAHTRVPGAHPQPRMDGGA. The residue at position 2044 (Ser-2044) is a Phosphoserine. Positions 2064-2082 form a coiled coil; sequence VDLVAQVKQLQEKLNRLLY. The segment at 2168–2214 is disordered; it reads SLIPDEMPDSPIQEKSECQDMSLSSPTSVLGGSRHQSHTAEAGPRKS. Ser-2177, Ser-2192, Ser-2225, Ser-2226, and Ser-2327 each carry phosphoserine. Polar residues predominate over residues 2186–2197; it reads QDMSLSSPTSVL. Residues 2318–2374 form a disordered region; sequence SFDSQETLSSPPPGLEGKADRSEKSDGSGFGARLSPGSGGPEAQTAGPVTPASISGR. Positions 2334 to 2343 are enriched in basic and acidic residues; sequence GKADRSEKSD. Phosphoserine occurs at positions 2352, 2355, 2477, and 2486. Residues 2536-3086 are a coiled coil; it reads QEKLQHLRTA…EKLLKHHLQK (551 aa). Disordered regions lie at residues 2875-2910 and 3084-3126; these read LEQSHPRLKEQEGRKAARRSAEARQSPAAAEQWRKW and LQKG…EEAH. Composition is skewed to basic and acidic residues over residues 2876 to 2896 and 3092 to 3102; these read EQSHPRLKEQEGRKAARRSAE and RSERSAWKPDE. The interval 2983–3246 is interaction with NEK2; it reads LSAARLLTSF…ARQPQSPPRT (264 aa). The segment at 3195 to 3208 is calmodulin-binding; it reads RFRTAVRVVIAILR. Residues 3224 to 3300 form a disordered region; it reads ALAQGKAPRP…RSLTASQDPE (77 aa). A compositionally biased stretch (low complexity) spans 3226–3240; it reads AQGKAPRPGPRARQP. Over residues 3283 to 3297 the composition is skewed to polar residues; that stretch reads PSPNSRLERSLTASQ. Ser-3302 is modified (phosphoserine).

In terms of assembly, interacts with CHD3. Interacts with CHD4; the interaction regulates centrosome integrity. Interacts with DISC1 and PCM1. Binds calmodulin. Interacts with CDK5RAP2; the interaction is leading to centrosomal localization of PCNT and CDK5RAP2. Interacts with isoform 1 of NEK2. Interacts with CEP131. Interacts with CCDC13. Interacts with CEP68. Interacts with ATF5; the ATF5:PCNT:polyglutamylated tubulin (PGT) tripartite unites the mother centriole and the pericentriolar material (PCM) in the centrosome. Cleaved during mitotis which leads to removal of CDK5RAP2 from the centrosome and promotes centriole disengagement and subsequent centriole separation. The C-terminal fragment is rapidly degraded following cleavage. Post-translationally, ubiquitinated by TRIM43; leading to proteasomal degradation. Expressed in all tissues tested, including placenta, liver, kidney and thymus.

The protein resides in the cytoplasm. It is found in the cytoskeleton. The protein localises to the microtubule organizing center. Its subcellular location is the centrosome. Its function is as follows. Integral component of the filamentous matrix of the centrosome involved in the initial establishment of organized microtubule arrays in both mitosis and meiosis. Plays a role, together with DISC1, in the microtubule network formation. Is an integral component of the pericentriolar material (PCM). May play an important role in preventing premature centrosome splitting during interphase by inhibiting NEK2 kinase activity at the centrosome. In Homo sapiens (Human), this protein is Pericentrin (PCNT).